The chain runs to 80 residues: Acyl carrier protein (80 aa).

A Carrier domain is found at 4 to 79 (QEIFEKVKAV…DAVEYIKAKL (76 aa)). Ser39 carries the post-translational modification O-(pantetheine 4'-phosphoryl)serine.

It belongs to the acyl carrier protein (ACP) family. 4'-phosphopantetheine is transferred from CoA to a specific serine of apo-ACP by AcpS. This modification is essential for activity because fatty acids are bound in thioester linkage to the sulfhydryl of the prosthetic group.

It is found in the cytoplasm. The protein operates within lipid metabolism; fatty acid biosynthesis. In terms of biological role, carrier of the growing fatty acid chain in fatty acid biosynthesis. The polypeptide is Acyl carrier protein (Thermus thermophilus (strain ATCC BAA-163 / DSM 7039 / HB27)).